The sequence spans 92 residues: Small ribosomal subunit protein bS18 (92 aa).

Residues 1 to 27 are disordered; the sequence is MTQQSNSADRKPRGKGPKRPRKPKVDP. The span at 12–22 shows a compositional bias: basic residues; the sequence is PRGKGPKRPRK.

Belongs to the bacterial ribosomal protein bS18 family. Part of the 30S ribosomal subunit. Forms a tight heterodimer with protein bS6.

Functionally, binds as a heterodimer with protein bS6 to the central domain of the 16S rRNA, where it helps stabilize the platform of the 30S subunit. The protein is Small ribosomal subunit protein bS18 of Deinococcus deserti (strain DSM 17065 / CIP 109153 / LMG 22923 / VCD115).